Consider the following 203-residue polypeptide: Urease accessory protein UreG (203 aa).

10 to 17 (GPVGAGKT) is a binding site for GTP.

It belongs to the SIMIBI class G3E GTPase family. UreG subfamily. In terms of assembly, homodimer. UreD, UreF and UreG form a complex that acts as a GTP-hydrolysis-dependent molecular chaperone, activating the urease apoprotein by helping to assemble the nickel containing metallocenter of UreC. The UreE protein probably delivers the nickel.

Its subcellular location is the cytoplasm. Its function is as follows. Facilitates the functional incorporation of the urease nickel metallocenter. This process requires GTP hydrolysis, probably effectuated by UreG. The chain is Urease accessory protein UreG from Kocuria rhizophila (strain ATCC 9341 / DSM 348 / NBRC 103217 / DC2201).